A 503-amino-acid polypeptide reads, in one-letter code: Aspartyl/glutamyl-tRNA(Asn/Gln) amidotransferase subunit B (503 aa).

Belongs to the GatB/GatE family. GatB subfamily. Heterotrimer of A, B and C subunits.

The enzyme catalyses L-glutamyl-tRNA(Gln) + L-glutamine + ATP + H2O = L-glutaminyl-tRNA(Gln) + L-glutamate + ADP + phosphate + H(+). It catalyses the reaction L-aspartyl-tRNA(Asn) + L-glutamine + ATP + H2O = L-asparaginyl-tRNA(Asn) + L-glutamate + ADP + phosphate + 2 H(+). Allows the formation of correctly charged Asn-tRNA(Asn) or Gln-tRNA(Gln) through the transamidation of misacylated Asp-tRNA(Asn) or Glu-tRNA(Gln) in organisms which lack either or both of asparaginyl-tRNA or glutaminyl-tRNA synthetases. The reaction takes place in the presence of glutamine and ATP through an activated phospho-Asp-tRNA(Asn) or phospho-Glu-tRNA(Gln). This is Aspartyl/glutamyl-tRNA(Asn/Gln) amidotransferase subunit B from Ruegeria pomeroyi (strain ATCC 700808 / DSM 15171 / DSS-3) (Silicibacter pomeroyi).